Reading from the N-terminus, the 504-residue chain is Anaerobic nitric oxide reductase transcription regulator NorR (504 aa).

Asp57 carries the 4-aspartylphosphate modification. Residues 187–416 (MIGLSPGMTQ…LEHAIHRAVV (230 aa)) form the Sigma-54 factor interaction domain. ATP-binding positions include 215–222 (GETGTGKE) and 278–287 (ADNGTLFLDE). Positions 479–498 (WAASARMLETDVANLHRLAK) form a DNA-binding region, H-T-H motif.

It participates in nitrogen metabolism; nitric oxide reduction. In terms of biological role, required for the expression of anaerobic nitric oxide (NO) reductase, acts as a transcriptional activator for at least the norVW operon. Activation also requires sigma-54. This chain is Anaerobic nitric oxide reductase transcription regulator NorR, found in Escherichia coli O7:K1 (strain IAI39 / ExPEC).